We begin with the raw amino-acid sequence, 298 residues long: MNEFERVRAYLTDLQDRICAAIEAADGQARFQEDLWQRAEGGGGRTRVLRDGAVFEQAGIGFSDVAGSRLPPSASANRPELAGASWRATGVSLVFHPLNPYVPTTHANVRFFQAQRDGEVVASWFGGGFDLTPFYPFDEDVQHWHRVARDLCAPFGDERYAAHKRWCDEYFFLRHRNETRGVGGLFFDDLHGDFERDFDYLRAVGDGFLDAYLPIVQQRKDTAYGEREREFQLYRRGRYVEFNLVYDRGTLFGLQSGGRSESILMSLPPRVRWEYGFNPEAGSAEARLADYLVPRDWL.

Ser92 is a substrate binding site. Positions 96 and 106 each coordinate a divalent metal cation. The Proton donor role is filled by His106. Residue 108-110 (NVR) participates in substrate binding. A divalent metal cation is bound by residues His145 and His175. The tract at residues 239–274 (YVEFNLVYDRGTLFGLQSGGRSESILMSLPPRVRWE) is important for dimerization. Position 257-259 (257-259 (GGR)) interacts with substrate.

The protein belongs to the aerobic coproporphyrinogen-III oxidase family. As to quaternary structure, homodimer. It depends on a divalent metal cation as a cofactor.

It is found in the cytoplasm. It catalyses the reaction coproporphyrinogen III + O2 + 2 H(+) = protoporphyrinogen IX + 2 CO2 + 2 H2O. It participates in porphyrin-containing compound metabolism; protoporphyrin-IX biosynthesis; protoporphyrinogen-IX from coproporphyrinogen-III (O2 route): step 1/1. Its function is as follows. Involved in the heme biosynthesis. Catalyzes the aerobic oxidative decarboxylation of propionate groups of rings A and B of coproporphyrinogen-III to yield the vinyl groups in protoporphyrinogen-IX. The chain is Oxygen-dependent coproporphyrinogen-III oxidase from Stenotrophomonas maltophilia (strain R551-3).